A 131-amino-acid polypeptide reads, in one-letter code: Small nuclear ribonucleoprotein SmD3b (131 aa).

A Sm domain is found at Ile-7 to Leu-79. A disordered region spans residues Ser-96–Arg-131.

This sequence belongs to the snRNP core protein family. As to expression, expressed in young seedlings, roots, leaves, flowers and immature siliques.

The protein resides in the cytoplasm. It is found in the cytosol. The protein localises to the nucleus. Core component of the spliceosomal U1, U2, U4 and U5 small nuclear ribonucleoproteins (snRNPs), the building blocks of the spliceosome. May play a major role in the splicing of cellular pre-mRNAs. Required for normal plant development. The sequence is that of Small nuclear ribonucleoprotein SmD3b from Arabidopsis thaliana (Mouse-ear cress).